A 579-amino-acid polypeptide reads, in one-letter code: uncharacterized protein (579 aa).

The next 12 membrane-spanning stretches (helical) occupy residues 20 to 40 (ALWAMMVGFFMIMLDSTVVAI), 54 to 74 (ATVVWVTSAYLLAYAVPMLVA), 86 to 106 (LYLIGLGVFTVASLGCGLSSG), 142 to 162 (GVALGAWGTVASVASLVGPLA), 174 to 194 (WIFFVNVPVGVIGLILAAYLI), 204 to 224 (FDWFGVGLSGAGMFLIVFGLQ), 234 to 254 (WIWAVIVGGIGFMSLFVYWQA), 279 to 299 (IAIIAFAGTGMMLPVTFYAQA), 310 to 330 (VLFAPTAIVGGVLAPFVGMII), 335 to 355 (PLCVLGFGFSVLAIAMTWLLC), 366 to 386 (LVLPFIALGVAGAFVWSPLTV), and 467 to 487 (MLLPAFVALFGIVAALFLVDF). A disordered region spans residues 516–579 (REPEEDCDTQ…DTESTAPSAL (64 aa)). Residues 526 to 540 (PLRASRPAAAAASRS) are compositionally biased toward low complexity. Residues 570–579 (DTESTAPSAL) are compositionally biased toward polar residues.

It belongs to the major facilitator superfamily. EmrB family.

The protein localises to the cell membrane. This is an uncharacterized protein from Mycobacterium tuberculosis (strain ATCC 25618 / H37Rv).